The sequence spans 208 residues: Truncated thymidylate kinase (208 aa).

Belongs to the thymidylate kinase family.

Its function is as follows. Catalyzes the conversion of dTMP to dTDP. This is Truncated thymidylate kinase (TMK) from Ornithodoros (relapsing fever ticks).